Consider the following 305-residue polypeptide: Flagellin FlaB2 (305 aa).

Residues 1–18 (MGLQKIVKKYNKKMKRKG) constitute a propeptide, propeptide.

It belongs to the archaeal flagellin family. Glycosylated.

Its subcellular location is the archaeal flagellum. Functionally, flagellin is the subunit protein which polymerizes to form the filaments of archaeal flagella. The polypeptide is Flagellin FlaB2 (Saccharolobus shibatae (strain ATCC 51178 / DSM 5389 / JCM 8931 / NBRC 15437 / B12) (Sulfolobus shibatae)).